Reading from the N-terminus, the 142-residue chain is Large ribosomal subunit protein uL11 (142 aa).

This sequence belongs to the universal ribosomal protein uL11 family. As to quaternary structure, part of the ribosomal stalk of the 50S ribosomal subunit. Interacts with L10 and the large rRNA to form the base of the stalk. L10 forms an elongated spine to which L12 dimers bind in a sequential fashion forming a multimeric L10(L12)X complex. In terms of processing, one or more lysine residues are methylated.

Forms part of the ribosomal stalk which helps the ribosome interact with GTP-bound translation factors. The chain is Large ribosomal subunit protein uL11 from Haemophilus ducreyi (strain 35000HP / ATCC 700724).